The following is a 60-amino-acid chain: Large ribosomal subunit protein bL32 (60 aa).

Residues 1–16 (MAVPRRKTSPSRRGMR) are compositionally biased toward basic residues. The interval 1-60 (MAVPRRKTSPSRRGMRRSADAIKKPTYAEDKDSGELRRPHHLDLKTGMYKGRQVLIKKES) is disordered. A compositionally biased stretch (basic and acidic residues) spans 17–44 (RSADAIKKPTYAEDKDSGELRRPHHLDL).

This sequence belongs to the bacterial ribosomal protein bL32 family.

The polypeptide is Large ribosomal subunit protein bL32 (Rhodopseudomonas palustris (strain BisA53)).